Reading from the N-terminus, the 265-residue chain is Indole-3-glycerol phosphate synthase (265 aa).

The protein belongs to the TrpC family.

It carries out the reaction 1-(2-carboxyphenylamino)-1-deoxy-D-ribulose 5-phosphate + H(+) = (1S,2R)-1-C-(indol-3-yl)glycerol 3-phosphate + CO2 + H2O. It participates in amino-acid biosynthesis; L-tryptophan biosynthesis; L-tryptophan from chorismate: step 4/5. The protein is Indole-3-glycerol phosphate synthase of Xanthomonas oryzae pv. oryzae (strain MAFF 311018).